Here is an 84-residue protein sequence, read N- to C-terminus: Exodeoxyribonuclease 7 small subunit (84 aa).

Belongs to the XseB family. In terms of assembly, heterooligomer composed of large and small subunits.

The protein localises to the cytoplasm. It catalyses the reaction Exonucleolytic cleavage in either 5'- to 3'- or 3'- to 5'-direction to yield nucleoside 5'-phosphates.. Bidirectionally degrades single-stranded DNA into large acid-insoluble oligonucleotides, which are then degraded further into small acid-soluble oligonucleotides. This chain is Exodeoxyribonuclease 7 small subunit, found in Herminiimonas arsenicoxydans.